The chain runs to 200 residues: GSSPCRSVIMTAKAVGVELNKKLLNLQAGEHLKPEFVKINPQHTIPTLVDNGFALWESRAIQVYLVEKYGKTDSLYPKCPKKRAVINQRLYFDMGTLYQSFANYYYPQVFAKAPADPEAFKKIEAAFEFLNTFLEGQEYAAGDSLTVADIALVASVSTFEVAGFEISKYANVNKWYENAKKVTPGWEENWAGCLEFKKYF.

One can recognise a GST N-terminal domain in the interval 1-73 (GSSPCRSVIM…YLVEKYGKTD (73 aa)). Glutathione contacts are provided by residues Ser2, 43–45 (HTI), and 57–59 (ESR). Residues 79–200 (CPKKRAVINQ…AGCLEFKKYF (122 aa)) enclose the GST C-terminal domain.

Belongs to the GST superfamily. Theta family. Homodimer.

The enzyme catalyses RX + glutathione = an S-substituted glutathione + a halide anion + H(+). The catalysed reaction is 1,1,1-trichloro-2,2-bis(4-chlorophenyl)ethane = 1,1-dichloro-2,2-bis(4-chlorophenyl)ethylene + chloride + H(+). Conjugation of reduced glutathione to a wide number of exogenous and endogenous hydrophobic electrophiles. Has DDT dehydrochlorinase activity. This Drosophila teissieri (Fruit fly) protein is Glutathione S-transferase 1-1 (GstD1).